Here is a 789-residue protein sequence, read N- to C-terminus: MHSEVTPIHHYKKYWAECFGTAPFLPTSREEMDQLGWDSCDVIIVTGDAYVDHPSFGMAIIGRLLEAQGFRVGIIAQPEWQTKDAFMTLGKPNLFFGVTAGNMDSMINRYTADKKIRHDDAYTPNNKGGMRPDRCSLVYSQRCREAYKDVPIVLGGIEASLRRVAHYDYWSDKVRRSILLDAKADILLFGNAERALVEVAHRLANGESINKMVDIRGTAVNLAQVPEHFKIIDSTRIDQPNKPFVPSNPYEVETQCATKGDEKEEAQPITIRPSRHDAKTTAVRLPSFEKLVNDRILYAHASRVLHLETNPYSGRALVQRHGDRELWVNQAPIPLTTEEMDFVFGLYYARVPHPKYGDAKIPAYDMIKTSVNIMRGCFGGCSFCSITEHEGRIIQNRSQESIINELKEIRDKVPGFTGVISDLGGPTANMYRLGCSDPKAEANCRRPSCVFPGICHKLNTDHKHTIDLYRAARDVDGIKKVVIASGVRYDLAIESPEYVRELVTHHVGGYLKIAPEHTEKGPLSMMMKPGMGTYDRFKELFEKYSAEAGKKQYLIPYFIAAHPGTEDEDMVNLALWLKSNNYRCDQVQNFYPSPMCNATAMYHAEVNPLKRVKYKKPEKVPVAKGEAQRRLHKALLRYHDPANWPMIREALIAMGKRHLIGDRPECLIPEKDSDLVTPAQSRKSGRHGANRFATKHTHSQPGFDALRGNKSGGQGRPNSGNKSNQGKPAGSKPTGSKPTANKPAGNQSARSEQNRGQQGQRGSATGGKPQGSGRPASRGNTQRQPQRAR.

Residues 363–642 (AYDMIKTSVN…KALLRYHDPA (280 aa)) form the Radical SAM core domain. [4Fe-4S] cluster contacts are provided by Cys-377, Cys-381, and Cys-384. Residues 669 to 789 (PEKDSDLVTP…NTQRQPQRAR (121 aa)) are disordered. The span at 683-698 (KSGRHGANRFATKHTH) shows a compositional bias: basic residues. Composition is skewed to polar residues over residues 716–726 (RPNSGNKSNQG), 733–763 (PTGSKPTANKPAGNQSARSEQNRGQQGQRGS), and 778–789 (RGNTQRQPQRAR).

Belongs to the UPF0313 family. It depends on [4Fe-4S] cluster as a cofactor.

The protein is UPF0313 protein VC_1711 of Vibrio cholerae serotype O1 (strain ATCC 39315 / El Tor Inaba N16961).